Consider the following 124-residue polypeptide: Small ribosomal subunit protein uS12c (124 aa).

Positions 104-124 are disordered; sequence SGGVKDRTQRRSKYGVKKPKS. The span at 113–124 shows a compositional bias: basic residues; the sequence is RRSKYGVKKPKS.

Belongs to the universal ribosomal protein uS12 family. As to quaternary structure, part of the 30S ribosomal subunit.

Its subcellular location is the plastid. The protein resides in the chloroplast. In terms of biological role, with S4 and S5 plays an important role in translational accuracy. Located at the interface of the 30S and 50S subunits. The chain is Small ribosomal subunit protein uS12c (rps12) from Thalassiosira pseudonana (Marine diatom).